A 136-amino-acid polypeptide reads, in one-letter code: MITDPIADMIARINNAIKARKDEVSVPTSKIKEQLSEILKREGYIEDYVVSEENKKGNQGTLIIKLKYLGRRNTKPAISKIQRVSKPGLRKYVSVDEMPYVQKGLGIAILTTNKGIMTDSEARKQRLGGEIICYVW.

This sequence belongs to the universal ribosomal protein uS8 family. Part of the 30S ribosomal subunit. Contacts proteins S5 and S12.

One of the primary rRNA binding proteins, it binds directly to 16S rRNA central domain where it helps coordinate assembly of the platform of the 30S subunit. This Sulfurihydrogenibium sp. (strain YO3AOP1) protein is Small ribosomal subunit protein uS8.